We begin with the raw amino-acid sequence, 403 residues long: Alkaline protease 1 (403 aa).

An N-terminal signal peptide occupies residues 1-21; sequence MLSIKRTLLLLGAVLPAVFGA. The propeptide occupies 22–125; it reads PVQETRRAAQ…QIWYLDALTT (104 aa). The region spanning 36–120 is the Inhibitor I9 domain; that stretch reads KYIVTFKPGT…HVEEDQIWYL (85 aa). The 274-residue stretch at 130-403 folds into the Peptidase S8 domain; the sequence is PWGLGSISHK…PNKLAYNGNA (274 aa). Residues Asp-162 and His-193 each act as charge relay system in the active site. 2 N-linked (GlcNAc...) asparagine glycosylation sites follow: Asn-253 and Asn-307. Ser-349 serves as the catalytic Charge relay system. Asn-367 carries N-linked (GlcNAc...) asparagine glycosylation.

Belongs to the peptidase S8 family.

It localises to the secreted. The catalysed reaction is Hydrolysis of proteins with broad specificity, and of Bz-Arg-OEt &gt; Ac-Tyr-OEt. Does not hydrolyze peptide amides.. Functionally, secreted alkaline protease that allows assimilation of proteinaceous substrates. Acts as a significant virulence factor in invasive aspergillosis. Involved in immune evasion from the human and mice complement systems during infection. Efficiently cleaves important components of the complement cascade such as such as C3, C4, C5, and C1q, as well as IgG, which leads to down-regulation of complement activation at the hyphal surface. This chain is Alkaline protease 1 (alp1), found in Aspergillus fumigatus (strain CBS 144.89 / FGSC A1163 / CEA10) (Neosartorya fumigata).